A 346-amino-acid chain; its full sequence is Dimethylallyltranstransferase (346 aa).

Positions 96, 99, and 128 each coordinate isopentenyl diphosphate. 2 residues coordinate Mg(2+): D135 and D141. Residue R147 coordinates isopentenyl diphosphate.

Belongs to the FPP/GGPP synthase family. Mg(2+) serves as cofactor.

It carries out the reaction isopentenyl diphosphate + dimethylallyl diphosphate = (2E)-geranyl diphosphate + diphosphate. The protein operates within isoprenoid biosynthesis; geranyl diphosphate biosynthesis; geranyl diphosphate from dimethylallyl diphosphate and isopentenyl diphosphate: step 1/1. Prenyltransferase involved in the biosynthesis of ambiguines, a family of hapalindole-type alkaloids. Catalyzes the addition of isopentenyl diphosphate (IPP) onto dimethylallyl diphosphate (DMAPP) to form geranyl pyrophosphate (GPP). Cannot use farnesyl diphosphate (FPP) or geranylgeranyl diphosphate (GGPP). The polypeptide is Dimethylallyltranstransferase (Fischerella ambigua (strain UTEX 1903)).